A 569-amino-acid polypeptide reads, in one-letter code: Alpha-amylase (569 aa).

The signal sequence occupies residues 1-28 (MARKTVAAALALVAGAAVAVTGNAPAQA). The Ca(2+) site is built by Asn-120, Gln-166, and Asp-175. The Nucleophile role is filled by Asp-205. Residue His-209 coordinates Ca(2+). Glu-232 (proton donor) is an active-site residue. The region spanning 468 to 569 (TTPPATSGAS…QLVLNDTFRS (102 aa)) is the CBM20 domain.

Belongs to the glycosyl hydrolase 13 family. In terms of assembly, monomer. The cofactor is Ca(2+).

The enzyme catalyses Endohydrolysis of (1-&gt;4)-alpha-D-glucosidic linkages in polysaccharides containing three or more (1-&gt;4)-alpha-linked D-glucose units.. This chain is Alpha-amylase (aml), found in Streptomyces violaceus (Streptomyces venezuelae).